A 151-amino-acid polypeptide reads, in one-letter code: UPF0178 protein VSAL_I0701 (151 aa).

Belongs to the UPF0178 family.

This chain is UPF0178 protein VSAL_I0701, found in Aliivibrio salmonicida (strain LFI1238) (Vibrio salmonicida (strain LFI1238)).